Reading from the N-terminus, the 48-residue chain is ATP synthase protein 8 (48 aa).

The helical transmembrane segment at 13–35 threads the bilayer; that stretch reads LTYGFTFILTILFLTSYVFLPMI.

Belongs to the ATPase protein 8 family. In terms of assembly, F-type ATPases have 2 components, CF(1) - the catalytic core - and CF(0) - the membrane proton channel. In yeast, the dimeric form of ATP synthase consists of 18 polypeptides: alpha, beta, gamma, delta, epsilon, 4 (B), 5 (OSCP), 6 (A), 8, 9 (C), d, E (Tim11), f, g, h, i, j and k.

It localises to the mitochondrion membrane. Its function is as follows. Mitochondrial membrane ATP synthase (F(1)F(0) ATP synthase or Complex V) produces ATP from ADP in the presence of a proton gradient across the membrane which is generated by electron transport complexes of the respiratory chain. F-type ATPases consist of two structural domains, F(1) - containing the extramembraneous catalytic core and F(0) - containing the membrane proton channel, linked together by a central stalk and a peripheral stalk. During catalysis, ATP synthesis in the catalytic domain of F(1) is coupled via a rotary mechanism of the central stalk subunits to proton translocation. Part of the complex F(0) domain. Minor subunit located with subunit a in the membrane. This is ATP synthase protein 8 (ATP8) from Eremothecium gossypii (strain ATCC 10895 / CBS 109.51 / FGSC 9923 / NRRL Y-1056) (Yeast).